The sequence spans 129 residues: Fluoride-specific ion channel FluC 2 (129 aa).

Transmembrane regions (helical) follow at residues 9–29 (LGTL…RYLL), 37–57 (GTIL…YYVI), 74–94 (MVGA…LSTF), and 100–120 (YLLI…ILGI). Na(+) contacts are provided by Gly76 and Thr79.

The protein belongs to the fluoride channel Fluc/FEX (TC 1.A.43) family.

The protein resides in the cell membrane. It carries out the reaction fluoride(in) = fluoride(out). Its activity is regulated as follows. Na(+) is not transported, but it plays an essential structural role and its presence is essential for fluoride channel function. Functionally, fluoride-specific ion channel. Important for reducing fluoride concentration in the cell, thus reducing its toxicity. This Ligilactobacillus salivarius (strain UCC118) (Lactobacillus salivarius) protein is Fluoride-specific ion channel FluC 2.